A 159-amino-acid polypeptide reads, in one-letter code: Ethylene-responsive transcription factor ERF069 (159 aa).

Disordered regions lie at residues 1–36 (MKRI…KKLV) and 128–159 (DAPT…EEVV). The segment at residues 74–134 (KFRGVRQRPW…IGPDAPTNFG (61 aa)) is a DNA-binding region (AP2/ERF). A compositionally biased stretch (basic and acidic residues) spans 136–148 (PDVDSAVVKKQDS).

Belongs to the AP2/ERF transcription factor family. ERF subfamily.

The protein resides in the nucleus. In terms of biological role, probably acts as a transcriptional activator. Binds to the GCC-box pathogenesis-related promoter element. May be involved in the regulation of gene expression by stress factors and by components of stress signal transduction pathways. The chain is Ethylene-responsive transcription factor ERF069 (ERF069) from Arabidopsis thaliana (Mouse-ear cress).